The sequence spans 65 residues: uncharacterized protein (65 aa).

A run of 2 helical transmembrane segments spans residues 12–31 (IVKWLIFTILLVASISLIVV) and 41–63 (LVARATPLAIVVGLSAIAAAIIV).

The protein resides in the cell membrane. This is an uncharacterized protein from Halalkalibacterium halodurans (strain ATCC BAA-125 / DSM 18197 / FERM 7344 / JCM 9153 / C-125) (Bacillus halodurans).